A 629-amino-acid chain; its full sequence is Smc-like protein Sph1 (629 aa).

Coiled-coil stretches lie at residues 139–282 (LETE…LLDD) and 318–487 (AETT…NQFD).

Belongs to the Sph1/Sph2 family.

The protein resides in the cytoplasm. In terms of biological role, may play a role in a late step of replication. The polypeptide is Smc-like protein Sph1 (sph1) (Halobacterium salinarum (Halobacterium halobium)).